We begin with the raw amino-acid sequence, 406 residues long: MMVTVVSNYCQLSQKQLSQTFAEKFTVTEELLQSLKKTALSGDEESIELLHNIALGYDKFGKEAEDILYHIVRNPTNETLSIIRLIKNACLKLYNLAHTATNFPLKPTGPDNSDVLLFKKLFSPSKLMTIIGDEIPLISEKQSLSKVLLNDENNELSDGTNFWDKNRQLTTDEIDCYLQKIAANAKNTEVNYPTGLYVPYSTRTHLEDALNENIKSDPSWPKAVQLFPINTGGHWILVSLQKIVNEKNNTQQIKCVIFNSLRALGHDKENSLKRVINSFNSEFMGEMSNNNIKVHLTEPEIIFLHADLQQYLSQSCGAFVCMAAQEVIEQRESNSDSAPYTLLKNYADRFKKYSAEEQYEIDFQHRLVNRNCYLDKYGDARINASYTQLEIKHSQPKNRASGKRVS.

The active site involves His234. Catalysis depends on Cys316, which acts as the Nucleophile.

It belongs to the peptidase C79 family.

Protease that can act as an efficient and specific deubiquitinating enzyme in vitro. Does not possess desumoylating and deneddylating activities. The physiological substrate is unknown. The sequence is that of Protease ElaD (elaD) from Escherichia coli O139:H28 (strain E24377A / ETEC).